We begin with the raw amino-acid sequence, 729 residues long: Solute carrier family 15 member 2 (729 aa).

The segment at 1-34 (MNPFQKNESKETLFSPVSIEEVPPRPPSPPKKPS) is disordered. Residues 1–57 (MNPFQKNESKETLFSPVSIEEVPPRPPSPPKKPSPTICGSNYPLSIAFIVVNEFCER) lie on the Cytoplasmic side of the membrane. Serine 9 is modified (phosphoserine). Threonine 12 carries the post-translational modification Phosphothreonine. Residues 24–33 (PRPPSPPKKP) show a composition bias toward pro residues. A Phosphoserine modification is found at serine 28. The helical transmembrane segment at 58 to 78 (FSYYGMKAVLILYFLYFLHWN) threads the bilayer. Topologically, residues 79 to 83 (EDTST) are extracellular. The helical transmembrane segment at 84 to 104 (SIYHAFSSLCYFTPILGAAIA) threads the bilayer. At 105 to 113 (DSWLGKFKT) the chain is on the cytoplasmic side. A helical membrane pass occupies residues 114-134 (IIYLSLVYVLGHVIKSLGALP). Residues 135-139 (ILGGQ) are Extracellular-facing. Residues 140-160 (VVHTVLSLIGLSLIALGTGGI) form a helical membrane-spanning segment. Over 161-183 (KPCVAAFGGDQFEEKHAEERTRY) the chain is Cytoplasmic. A helical membrane pass occupies residues 184–204 (FSVFYLSINAGSLISTFITPM). Over 205–217 (LRGDVQCFGEDCY) the chain is Extracellular. Residues 218-238 (ALAFGVPGLLMVIALVVFAMG) traverse the membrane as a helical segment. Residues 239–295 (SKIYNKPPPEGNIVAQVFKCIWFAISNRFKNRSGDIPKRQHWLDWAAEKYPKQLIMD) are Cytoplasmic-facing. The helical transmembrane segment at 296 to 316 (VKALTRVLFLYIPLPMFWALL) threads the bilayer. Topologically, residues 317–343 (DQQGSRWTLQAIRMNRNLGFFVLQPDQ) are extracellular. Residues 344–364 (MQVLNPLLVLIFIPLFDFVIY) form a helical membrane-spanning segment. Topologically, residues 365 to 380 (RLVSKCGINFSSLRKM) are cytoplasmic. Residues 381–401 (AVGMILACLAFAVAAAVEIKI) form a helical membrane-spanning segment. Residues 402–611 (NEMAPAQPGP…PANKMSIAWQ (210 aa)) are Extracellular-facing. Residues 402-611 (NEMAPAQPGP…PANKMSIAWQ (210 aa)) are extracellular domain (ECD). N-linked (GlcNAc...) asparagine glycans are attached at residues asparagine 435, asparagine 472, asparagine 528, asparagine 567, and asparagine 587. Residues 612-632 (LPQYALVTAGEVMFSVTGLEF) form a helical membrane-spanning segment. The Cytoplasmic portion of the chain corresponds to 633 to 643 (SYSQAPSSMKS). The chain crosses the membrane as a helical span at residues 644-664 (VLQAAWLLTIAVGNIIVLVVA). Residues 665–674 (QFSGLVQWAE) are Extracellular-facing. The chain crosses the membrane as a helical span at residues 675-695 (FILFSCLLLVICLIFSIMGYY). Residues 696–729 (YVPVKTEDMRGPADKHIPHIQGNMIKLETKKTKL) lie on the Cytoplasmic side of the membrane.

The protein belongs to the major facilitator superfamily. Proton-dependent oligopeptide transporter (POT/PTR) (TC 2.A.17) family. In terms of assembly, interacts (via extracellular domain region) with trypsin. Expressed in kidney. Not detected in intestine. Highly expressed in macrophages.

The protein localises to the apical cell membrane. The protein resides in the cytoplasmic vesicle. Its subcellular location is the phagosome membrane. It localises to the cell membrane. The catalysed reaction is a dipeptide(out) + 2 H(+)(out) = a dipeptide(in) + 2 H(+)(in). It catalyses the reaction N-acetyl-D-muramoyl-L-alanyl-D-isoglutamine(out) + 3 H(+)(out) = N-acetyl-D-muramoyl-L-alanyl-D-isoglutamine(in) + 3 H(+)(in). It carries out the reaction glycyl-L-leucine(out) + 2 H(+)(out) = glycyl-L-leucine(in) + 2 H(+)(in). The enzyme catalyses glycyl-L-lysine(out) + 2 H(+)(out) = glycyl-L-lysine(in) + 2 H(+)(in). The catalysed reaction is glycyl-L-glutamate(out) + 3 H(+)(out) = glycyl-L-glutamate(in) + 3 H(+)(in). It catalyses the reaction L-alanyl-L-alanine(out) + 2 H(+)(out) = L-alanyl-L-alanine(in) + 2 H(+)(in). It carries out the reaction an L-amino acid tripeptide(out) + 2 H(+)(out) = an L-amino acid tripeptide(in) + 2 H(+)(in). The enzyme catalyses carnosine(out) + 2 H(+)(out) = carnosine(in) + 2 H(+)(in). Functionally, proton-coupled amino-acid transporter that transports oligopeptides of 2 to 4 amino acids with a preference for dipeptides. Transports neutral and anionic dipeptides with a proton to peptide stoichiometry of 2:1 or 3:1. In kidney, involved in the absorption of circulating di- and tripeptides from the glomerular filtrate. Can also transport beta-lactam antibiotics, such as the aminocephalosporin cefadroxil, and other antiviral and anticancer drugs. Transports the dipeptide-like aminopeptidase inhibitor bestatin. Also able to transport carnosine. Involved in innate immunity by promoting the detection of microbial pathogens by NOD-like receptors (NLRs). Mediates transport of bacterial peptidoglycans across the plasma membrane or, in macrophages, the phagosome membrane: catalyzes the transport of certain bacterial peptidoglycans, such as muramyl dipeptide (MDP), the NOD2 ligand. The chain is Solute carrier family 15 member 2 from Homo sapiens (Human).